Here is a 475-residue protein sequence, read N- to C-terminus: Sulfate adenylyltransferase subunit 1 (475 aa).

A tr-type G domain is found at 25–239 (KSLLRFLTCG…EVLETVEIQR (215 aa)). The segment at 34–41 (GSVDDGKS) is G1. 34-41 (GSVDDGKS) provides a ligand contact to GTP. A G2 region spans residues 92 to 96 (GITID). The interval 113–116 (DTPG) is G3. GTP-binding positions include 113–117 (DTPGH) and 168–171 (NKMD). Positions 168–171 (NKMD) are G4. The segment at 206 to 208 (SAL) is G5.

It belongs to the TRAFAC class translation factor GTPase superfamily. Classic translation factor GTPase family. CysN/NodQ subfamily. As to quaternary structure, heterodimer composed of CysD, the smaller subunit, and CysN.

The catalysed reaction is sulfate + ATP + H(+) = adenosine 5'-phosphosulfate + diphosphate. Its pathway is sulfur metabolism; hydrogen sulfide biosynthesis; sulfite from sulfate: step 1/3. Its function is as follows. With CysD forms the ATP sulfurylase (ATPS) that catalyzes the adenylation of sulfate producing adenosine 5'-phosphosulfate (APS) and diphosphate, the first enzymatic step in sulfur assimilation pathway. APS synthesis involves the formation of a high-energy phosphoric-sulfuric acid anhydride bond driven by GTP hydrolysis by CysN coupled to ATP hydrolysis by CysD. The chain is Sulfate adenylyltransferase subunit 1 from Escherichia coli O17:K52:H18 (strain UMN026 / ExPEC).